The primary structure comprises 1091 residues: ATP-dependent helicase/deoxyribonuclease subunit B (1091 aa).

This sequence belongs to the helicase family. AddB/RexB type 2 subfamily. Heterodimer of AddA and RexB. Mg(2+) serves as cofactor.

In terms of biological role, the heterodimer acts as both an ATP-dependent DNA helicase and an ATP-dependent, dual-direction single-stranded exonuclease. Recognizes the chi site generating a DNA molecule suitable for the initiation of homologous recombination. This subunit has 5' -&gt; 3' nuclease activity but not helicase activity. The polypeptide is ATP-dependent helicase/deoxyribonuclease subunit B (Streptococcus pneumoniae (strain Hungary19A-6)).